Here is a 400-residue protein sequence, read N- to C-terminus: Phosphoglycerate kinase (400 aa).

Residues 24–26 (DFN), arginine 39, 62–65 (HLGK), arginine 123, and arginine 156 contribute to the substrate site. ATP is bound by residues lysine 207, glycine 298, glutamate 329, and 356 to 359 (GGDS).

The protein belongs to the phosphoglycerate kinase family. As to quaternary structure, monomer.

The protein localises to the cytoplasm. It carries out the reaction (2R)-3-phosphoglycerate + ATP = (2R)-3-phospho-glyceroyl phosphate + ADP. The protein operates within carbohydrate degradation; glycolysis; pyruvate from D-glyceraldehyde 3-phosphate: step 2/5. The polypeptide is Phosphoglycerate kinase (Clostridioides difficile (strain 630) (Peptoclostridium difficile)).